Consider the following 264-residue polypeptide: Hemin import ATP-binding protein HmuV (264 aa).

The region spanning 10–246 is the ABC transporter domain; that stretch reads LQAQNLSYSI…HTLRKWYQAD (237 aa). 42 to 49 serves as a coordination point for ATP; sequence GPNGAGKS.

This sequence belongs to the ABC transporter superfamily. Heme (hemin) importer (TC 3.A.1.14.5) family. The complex is composed of two ATP-binding proteins (HmuV), two transmembrane proteins (HmuU) and a solute-binding protein (HmuT).

Its subcellular location is the cell inner membrane. Functionally, part of the ABC transporter complex HmuTUV involved in hemin import. Responsible for energy coupling to the transport system. The chain is Hemin import ATP-binding protein HmuV from Photorhabdus laumondii subsp. laumondii (strain DSM 15139 / CIP 105565 / TT01) (Photorhabdus luminescens subsp. laumondii).